The following is a 181-amino-acid chain: Adenylate kinase (181 aa).

Residue 7-15 (GVAGVGKTT) participates in ATP binding.

The protein belongs to the archaeal adenylate kinase family.

It is found in the cytoplasm. It carries out the reaction AMP + ATP = 2 ADP. This Thermoplasma volcanium (strain ATCC 51530 / DSM 4299 / JCM 9571 / NBRC 15438 / GSS1) protein is Adenylate kinase (adkA).